The chain runs to 73 residues: UPF0346 protein BLi02292/BL01432 (73 aa).

It belongs to the UPF0346 family.

The chain is UPF0346 protein BLi02292/BL01432 from Bacillus licheniformis (strain ATCC 14580 / DSM 13 / JCM 2505 / CCUG 7422 / NBRC 12200 / NCIMB 9375 / NCTC 10341 / NRRL NRS-1264 / Gibson 46).